The primary structure comprises 662 residues: Sodium/glucose cotransporter 1 (662 aa).

At 1–24 (MDSSTLSPLTTSTAAPLESYERIR) the chain is on the extracellular side. The helical transmembrane segment at 25–47 (NAADISVIVIYFLVVMAVGLWAM) threads the bilayer. Topologically, residues 48 to 66 (FSTNRGTVGGFFLAGRSMV) are cytoplasmic. A helical transmembrane segment spans residues 67 to 90 (WWPIGASLFASNIGSGHFVGLAGT). Over 91–95 (GAASG) the chain is Extracellular. A helical membrane pass occupies residues 96 to 117 (IATGGFEWNALIMVVVLGWVFV). Topologically, residues 118-139 (PIYIRAGVVTMPEYLQKRFGGK) are cytoplasmic. A helical membrane pass occupies residues 140-169 (RIQIYLSILSLLLYIFTKISADIFSGAIFI). Over 170–176 (QLTLGLD) the chain is Extracellular. The chain crosses the membrane as a helical span at residues 177–193 (IYVAIIILLVITGLYTI). The Cytoplasmic segment spans residues 194 to 202 (TGGLAAVIY). The chain crosses the membrane as a helical span at residues 203-221 (TDTLQTAIMMVGSVILTGF). At 222–275 (AFHEVGGYEAFTEKYMRAIPSQISYGNTSIPQKCYTPREDAFHIFRDAITGDIP) the chain is on the extracellular side. The N-linked (GlcNAc...) asparagine glycan is linked to Asn-248. 5 disulfide bridges follow: Cys-255–Cys-511, Cys-255–Cys-608, Cys-345–Cys-351, Cys-355–Cys-361, and Cys-517–Cys-522. A helical membrane pass occupies residues 276–295 (WPGLVFGMSILTLWYWCTDQ). Residues 296–309 (VIVQRCLSAKNLSH) are Cytoplasmic-facing. The chain crosses the membrane as a helical span at residues 310 to 331 (VKAGCILCGYLKVMPMFLIVMM). At 332 to 375 (GMVSRILYTDKVACVVPSECERYCGTRVGCTNIAFPTLVVELMP) the chain is on the extracellular side. A helical transmembrane segment spans residues 376–406 (NGLRGLMLSVMMASLMSSLTSIFNSASTLFT). Residues 407-422 (MDIYTKIRKKASEKEL) are Cytoplasmic-facing. Residues 423 to 444 (MIAGRLFMLFLIGISIAWVPIV) form a helical membrane-spanning segment. The Extracellular portion of the chain corresponds to 445-451 (QSAQSGQ). Residues 452–477 (LFDYIQSITSYLGPPIAAVFLLAIFW) traverse the membrane as a helical segment. D-glucose is bound at residue Gln-457. The Cytoplasmic portion of the chain corresponds to 478–481 (KRVN). Residues 482-504 (EPGAFWGLVLGFLIGISRMITEF) form a helical membrane-spanning segment. Topologically, residues 505 to 525 (AYGTGSCMEPSNCPTIICGVH) are extracellular. The helical transmembrane segment at 526–547 (YLYFAIILFVISIITVVVVSLF) threads the bilayer. The Cytoplasmic portion of the chain corresponds to 548 to 642 (TKPIPDVHLY…TSEHPLWRTV (95 aa)). A helical membrane pass occupies residues 643-660 (VNINGVILLAVAVFCYAY). Residues 661-662 (FA) are Extracellular-facing.

The protein belongs to the sodium:solute symporter (SSF) (TC 2.A.21) family. N-glycosylation is not necessary for the cotransporter function. As to expression, found predominantly in intestine, renal cortex and in outer renal medulla.

The protein resides in the apical cell membrane. The catalysed reaction is D-glucose(out) + 2 Na(+)(out) = D-glucose(in) + 2 Na(+)(in). The enzyme catalyses D-galactose(out) + 2 Na(+)(out) = D-galactose(in) + 2 Na(+)(in). Enhanced by the interaction with PDZK1IP1/MAP17; but unlike SLC5A2/SGLT2, PDZK1IP1 is not essential for SLC5A1 transporter activity. Possibly modulated by cholesterol binding. In terms of biological role, electrogenic Na(+)-coupled sugar symporter that actively transports D-glucose or D-galactose at the plasma membrane, with a Na(+) to sugar coupling ratio of 2:1. Transporter activity is driven by a transmembrane Na(+) electrochemical gradient set by the Na(+)/K(+) pump. Has a primary role in the transport of dietary monosaccharides from enterocytes to blood. Responsible for the absorption of D-glucose or D-galactose across the apical brush-border membrane of enterocytes, whereas basolateral exit is provided by GLUT2. Additionally, functions as a D-glucose sensor in enteroendocrine cells, triggering the secretion of the incretins GCG and GIP that control food intake and energy homeostasis. Together with SGLT2, functions in reabsorption of D-glucose from glomerular filtrate, playing a nonredundant role in the S3 segment of the proximal tubules. Transports D-glucose into endometrial epithelial cells, controlling glycogen synthesis and nutritional support for the embryo as well as the decidual transformation of endometrium prior to conception. Acts as a water channel enabling passive water transport in response to the osmotic gradient created upon sugar and Na(+) uptake. Has high water conductivity comparable to aquaporins and therefore is expected to play an important role in transepithelial water permeability, especially in the small intestine. This Oryctolagus cuniculus (Rabbit) protein is Sodium/glucose cotransporter 1 (SLC5A1).